Consider the following 102-residue polypeptide: Large ribosomal subunit protein uL23 (102 aa).

It belongs to the universal ribosomal protein uL23 family. As to quaternary structure, part of the 50S ribosomal subunit. Contacts protein L29, and trigger factor when it is bound to the ribosome.

One of the early assembly proteins it binds 23S rRNA. One of the proteins that surrounds the polypeptide exit tunnel on the outside of the ribosome. Forms the main docking site for trigger factor binding to the ribosome. The chain is Large ribosomal subunit protein uL23 from Cutibacterium acnes (strain DSM 16379 / KPA171202) (Propionibacterium acnes).